A 485-amino-acid chain; its full sequence is Aspartyl/glutamyl-tRNA(Asn/Gln) amidotransferase subunit B (485 aa).

Belongs to the GatB/GatE family. GatB subfamily. As to quaternary structure, heterotrimer of A, B and C subunits.

The catalysed reaction is L-glutamyl-tRNA(Gln) + L-glutamine + ATP + H2O = L-glutaminyl-tRNA(Gln) + L-glutamate + ADP + phosphate + H(+). It carries out the reaction L-aspartyl-tRNA(Asn) + L-glutamine + ATP + H2O = L-asparaginyl-tRNA(Asn) + L-glutamate + ADP + phosphate + 2 H(+). Functionally, allows the formation of correctly charged Asn-tRNA(Asn) or Gln-tRNA(Gln) through the transamidation of misacylated Asp-tRNA(Asn) or Glu-tRNA(Gln) in organisms which lack either or both of asparaginyl-tRNA or glutaminyl-tRNA synthetases. The reaction takes place in the presence of glutamine and ATP through an activated phospho-Asp-tRNA(Asn) or phospho-Glu-tRNA(Gln). This chain is Aspartyl/glutamyl-tRNA(Asn/Gln) amidotransferase subunit B, found in Gluconobacter oxydans (strain 621H) (Gluconobacter suboxydans).